A 146-amino-acid chain; its full sequence is Aminoglycoside N(6')-acetyltransferase type 1 (146 aa).

Residues 1 to 146 (MNIMPISESQ…RVVYFKKNIG (146 aa)) form the N-acetyltransferase domain. Positions 22, 25, 66, and 79 each coordinate substrate. 81 to 83 (IFV) is an acetyl-CoA binding site. Residue D115 participates in substrate binding. N120 is an acetyl-CoA binding site. Residue E136 coordinates substrate.

Homodimer.

The catalysed reaction is kanamycin B + acetyl-CoA = N(6')-acetylkanamycin B + CoA + H(+). In terms of biological role, catalyzes the transfer of an acetyl group from acetyl-CoA to the 6'-amino group of aminoglycoside molecules conferring resistance to antibiotics containing the purpurosamine ring including amikacin, kanamycin, tobramycin and netilmicin. This Acinetobacter baumannii protein is Aminoglycoside N(6')-acetyltransferase type 1.